A 354-amino-acid polypeptide reads, in one-letter code: Clavesin-1 (354 aa).

Positions 118–279 (IKRALIDGFP…EFGGTLPPYD (162 aa)) constitute a CRAL-TRIO domain. Positions 317-354 (RECSPKPMKRSQSVVEAGTLKHEEKGENENTQPLLALD) are disordered. Residues 335–344 (TLKHEEKGEN) show a composition bias toward basic and acidic residues. Residues 345–354 (ENTQPLLALD) show a composition bias toward polar residues.

In terms of assembly, forms a complex with clathrin heavy chain and gamma-adaptin.

The protein localises to the golgi apparatus. It is found in the trans-Golgi network membrane. Its subcellular location is the early endosome membrane. It localises to the cytoplasmic vesicle. The protein resides in the clathrin-coated vesicle. In terms of biological role, required for normal morphology of late endosomes and/or lysosomes in neurons. Binds phosphatidylinositol 3,5-bisphosphate (PtdIns(3,5)P2). The protein is Clavesin-1 (Clvs1) of Mus musculus (Mouse).